A 405-amino-acid chain; its full sequence is MAKLTVSDLELSGKKVLMRVDFNVPIKAGVIGNDNRIVAALPTIKYVLENNGRAILFSHLGRIKSEDDKKELSLAPVAARLGELLGKDVKFVPQTRGEELESAINALQDGEVLMVENTRFEDVVDGEVVKNESKNNPELGKYWASLGDDLFINDAFGTAHRAHASNVGIASNVSQAAAGFLMEKEIKFLGDAVANPVRPFVAIIGGAKVSDKIEIVKSLLNKADKVIVGGGMAYTFDAAKGNKIGNSLFEADKVELAKELMAEAGDKLVLPIDSIAADAFSNDAKTEVVDAEDGIPDGYMGLDIGPKSVKLLQDTLSDAKTVVWNGPMGVFEMSNFAKGTLAIGEELVKVTENGGTTIVGGGDSTAAVQQLGVADKLTHISTGGGASLEYLEGKELPGIASISEK.

Residues 21–23, arginine 36, 59–62, arginine 119, and arginine 161 contribute to the substrate site; these read DFN and HLGR. ATP is bound by residues lysine 212, glycine 301, glutamate 332, and 361–364; that span reads GGDS.

The protein belongs to the phosphoglycerate kinase family. In terms of assembly, monomer.

Its subcellular location is the cytoplasm. The enzyme catalyses (2R)-3-phosphoglycerate + ATP = (2R)-3-phospho-glyceroyl phosphate + ADP. It functions in the pathway carbohydrate degradation; glycolysis; pyruvate from D-glyceraldehyde 3-phosphate: step 2/5. The protein is Phosphoglycerate kinase of Leuconostoc mesenteroides subsp. mesenteroides (strain ATCC 8293 / DSM 20343 / BCRC 11652 / CCM 1803 / JCM 6124 / NCDO 523 / NBRC 100496 / NCIMB 8023 / NCTC 12954 / NRRL B-1118 / 37Y).